A 442-amino-acid polypeptide reads, in one-letter code: MASLAAACRVSARLAARKLQHDAAVRGFRSSAAALAAQNFMMPALSPTMTEGNIASWRVKEGERFSAGDVLLEIETDKATMDVEAQEDGILMKIIQPDGSKGVQVGTRIAVVAEEGDDITKLEIPPDEGPQQLKAAAPAPAPTPAPAPASPQPQFAAPTPSPPKASTKVPARKYPLLPSVHQLIKENGLDESAVSNITPTGPGGRILKGDVLAYLGKINPNTPAQISARFEKASHLDLSNVKVAKPVEPEKPQEEKASAPAPAPRAPEPPAKAVVSLPISLSAVLEAQQRINKKLGIFLPLSTFISRATELANEELPLPTNYQPTADELFDQVLGLDKVPGYVSAAKQRATRGNYVPDIKAPIPPKAAPKPKQKKIDIIDILAAAPKAKSVKPAGPSLVPGAVTEGLNVFSLQVPKTEERRAKVFLERVKHVLENEPGRLVL.

Residues M1–L35 constitute a mitochondrion transit peptide. The 77-residue stretch at A37–A113 folds into the Lipoyl-binding domain. An N6-lipoyllysine modification is found at K78. The interval I119 to V169 is disordered. A compositionally biased stretch (pro residues) spans A139 to P151. Residues Q152–V169 are compositionally biased toward low complexity. The Peripheral subunit-binding (PSBD) domain maps to P175 to L215. The tract at residues A244–P269 is disordered. Over residues K245–A257 the composition is skewed to basic and acidic residues. Residues P317–L336 are interaction to the E2 core.

This sequence belongs to the 2-oxoacid dehydrogenase family. As to quaternary structure, eukaryotic pyruvate dehydrogenase (PDH) complexes are organized as a core consisting of the oligomeric dihydrolipoamide acetyl-transferase (E2), around which are arranged multiple copies of pyruvate dehydrogenase (E1), dihydrolipoamide dehydrogenase (E3) and protein X (E3BP) bound by non-covalent bonds. The Chaetomium thermophilum PDH complex contains 60 E2 units, 12 E3BP units, about 20 E1 units, and 12 or more E3 units. The units are organized in 1 E2 60-mer, 4 E3BP trimers, about 20 E1 tetramers, and a maximum of 12 E3 dimers. The E3BP trimers are bound inside the icosahedral core with tetrahedral symmetry.

The protein resides in the mitochondrion. The 10-megadalton pyruvate dehydrogenase complex contains multiple copies of three enzymatic components: pyruvate dehydrogenase (E1), dihydrolipoamide acetyltransferase (E2) and lipoamide dehydrogenase (E3) and catalyzes the overall oxidative decarboxylation of pyruvate to form acetyl-CoA and CO(2). E3BP is responsible for tethering E3 in proximity to the core, forming the entire metabolon, and the number of E3s is limited by the number of E3BPs. Within the complex, pyruvate and thiamine pyrophosphate (TPP or vitamin B1) are bound by pyruvate dehydrogenase E1 subunits alpha and beta and pyruvate is decarboxylated leading to the 2-carbon hydrohyethyl bound to TPP. The E2 component contains covalently-bound lipoyl cofactors and transfers the hydroxyethyl group from TPP to an oxidized form of covalently bound lipoamide, and the resulting acetyl group is then transferred to free coenzyme A to form acetyl-CoA and reduced dihydrolipoamide-E2. Finally, the flavoprotein dihydrolipoamide dehydrogenase (E3) re-oxidizes the lipoyl group of dihydrolipoamide-E2 to form lipoamide-E2 and NADH. A fourth subunit, E3BP, is responsible for tethering E3 in proximity to the core, forming the entire metabolon. The sequence is that of Pyruvate dehydrogenase complex protein X component, mitochondrial from Chaetomium thermophilum (strain DSM 1495 / CBS 144.50 / IMI 039719) (Thermochaetoides thermophila).